The chain runs to 156 residues: Small ribosomal subunit protein uS7 (156 aa).

Belongs to the universal ribosomal protein uS7 family. In terms of assembly, part of the 30S ribosomal subunit. Contacts proteins S9 and S11.

In terms of biological role, one of the primary rRNA binding proteins, it binds directly to 16S rRNA where it nucleates assembly of the head domain of the 30S subunit. Is located at the subunit interface close to the decoding center, probably blocks exit of the E-site tRNA. This Bacillus cytotoxicus (strain DSM 22905 / CIP 110041 / 391-98 / NVH 391-98) protein is Small ribosomal subunit protein uS7.